The sequence spans 537 residues: Chaperonin GroEL (537 aa).

ATP is bound by residues 29 to 32 (TLGP), 86 to 90 (DGTTT), Gly413, and Asp492.

The protein belongs to the chaperonin (HSP60) family. Forms a cylinder of 14 subunits composed of two heptameric rings stacked back-to-back. Interacts with the co-chaperonin GroES.

The protein localises to the cytoplasm. It carries out the reaction ATP + H2O + a folded polypeptide = ADP + phosphate + an unfolded polypeptide.. Its function is as follows. Together with its co-chaperonin GroES, plays an essential role in assisting protein folding. The GroEL-GroES system forms a nano-cage that allows encapsulation of the non-native substrate proteins and provides a physical environment optimized to promote and accelerate protein folding. The protein is Chaperonin GroEL of Dehalococcoides mccartyi (strain CBDB1).